Reading from the N-terminus, the 124-residue chain is Large ribosomal subunit protein bL12 (124 aa).

It belongs to the bacterial ribosomal protein bL12 family. In terms of assembly, homodimer. Part of the ribosomal stalk of the 50S ribosomal subunit. Forms a multimeric L10(L12)X complex, where L10 forms an elongated spine to which 2 to 4 L12 dimers bind in a sequential fashion. Binds GTP-bound translation factors.

Functionally, forms part of the ribosomal stalk which helps the ribosome interact with GTP-bound translation factors. Is thus essential for accurate translation. This chain is Large ribosomal subunit protein bL12, found in Hamiltonella defensa subsp. Acyrthosiphon pisum (strain 5AT).